Here is a 628-residue protein sequence, read N- to C-terminus: Forkhead box protein O (628 aa).

5 disordered regions span residues 39-77 (RARSNTWPCPRPENFVEPTDELDSTKASNQQLAPGDSQQ), 182-205 (KSVRRRAASMETSRYEKRRGRAKK), 217-269 (GLND…RLSP), 316-359 (QQQG…APGY), and 389-415 (NSVTTTMSPAYPNSEPSSDSLNTYSNV). Phosphothreonine; by PKB/AKT1 is present on threonine 44. Polar residues predominate over residues 63-77 (TKASNQQLAPGDSQQ). Residue serine 75 is modified to Phosphoserine. The segment at residues 95–201 (WGNLSYADLI…ETSRYEKRRG (107 aa)) is a DNA-binding region (fork-head). Serine 190 carries the post-translational modification Phosphoserine; by PKB/AKT1. Polar residues-rich tracts occupy residues 221 to 230 (ATPSPSSSVS) and 256 to 265 (RASSNASSCG). Serine 259 carries the phosphoserine; by PKB/AKT1 modification. 3 positions are modified to phosphoserine: serine 262, serine 263, and serine 268. Over residues 328 to 337 (SQPPPPPYQP) the composition is skewed to pro residues. Positions 338–351 (PQHQQAQQQQSPYA) are enriched in low complexity. Residues 402–414 (SEPSSDSLNTYSN) show a composition bias toward polar residues.

Interacts with melt.

It is found in the cytoplasm. Its subcellular location is the nucleus. Its function is as follows. Transcription factor involved in the regulation of the insulin signaling pathway. Consistently activates both the downstream target Thor\d4EBP and the feedback control target InR. Involved in negative regulation of the cell cycle, modulating cell growth and proliferation. In response to cellular stresses, such as nutrient deprivation or increased levels of reactive oxygen species, foxo is activated and inhibits growth through the action of target genes such as Thor. Foxo activated in the adult fat body can regulate lifespan in adults; an insulin peptide itself may function as one secondary messenger of insulin-regulated aging. Also regulates Lip4, homolog of human acid lipases, thereby acting as a key modulator of lipid metabolism by insulin signaling and integrates insulin responses to glucose and lipid homeostasis. This Drosophila yakuba (Fruit fly) protein is Forkhead box protein O.